A 103-amino-acid polypeptide reads, in one-letter code: Small ribosomal subunit protein uS10 (103 aa).

Belongs to the universal ribosomal protein uS10 family. In terms of assembly, part of the 30S ribosomal subunit.

In terms of biological role, involved in the binding of tRNA to the ribosomes. The sequence is that of Small ribosomal subunit protein uS10 from Bordetella parapertussis (strain 12822 / ATCC BAA-587 / NCTC 13253).